The chain runs to 461 residues: Ribulose bisphosphate carboxylase (461 aa).

Residue asparagine 112 coordinates substrate. The active-site Proton acceptor is the lysine 167. Lysine 169 lines the substrate pocket. Residues lysine 192, aspartate 194, and glutamate 195 each coordinate Mg(2+). Position 192 is an N6-carboxylysine (lysine 192). The active-site Proton acceptor is the histidine 288. Substrate is bound by residues arginine 289, histidine 322, and serine 369.

The protein belongs to the RuBisCO large chain family. Type II subfamily. In terms of assembly, homodimer. The cofactor is Mg(2+).

It catalyses the reaction 2 (2R)-3-phosphoglycerate + 2 H(+) = D-ribulose 1,5-bisphosphate + CO2 + H2O. The catalysed reaction is D-ribulose 1,5-bisphosphate + O2 = 2-phosphoglycolate + (2R)-3-phosphoglycerate + 2 H(+). Its function is as follows. RuBisCO catalyzes two reactions: the carboxylation of D-ribulose 1,5-bisphosphate, the primary event in carbon dioxide fixation, as well as the oxidative fragmentation of the pentose substrate. Both reactions occur simultaneously and in competition at the same active site. The chain is Ribulose bisphosphate carboxylase from Rhodopseudomonas palustris (strain HaA2).